Reading from the N-terminus, the 114-residue chain is T cell receptor beta variable 6-1 (114 aa).

The signal sequence occupies residues 1–21 (MSIGLLCCVAFSLLWASPVNA). Residues 22–114 (GVTQTPKFQV…TSVYFCASSE (93 aa)) form the Ig-like domain. Cysteine 42 and cysteine 110 are joined by a disulfide. A glycan (N-linked (GlcNAc...) asparagine) is linked at asparagine 84.

In terms of assembly, alpha-beta TR is a heterodimer composed of an alpha and beta chain; disulfide-linked. The alpha-beta TR is associated with the transmembrane signaling CD3 coreceptor proteins to form the TR-CD3 (TcR or TCR). The assembly of alpha-beta TR heterodimers with CD3 occurs in the endoplasmic reticulum where a single alpha-beta TR heterodimer associates with one CD3D-CD3E heterodimer, one CD3G-CD3E heterodimer and one CD247 homodimer forming a stable octameric structure. CD3D-CD3E and CD3G-CD3E heterodimers preferentially associate with TR alpha and TR beta chains, respectively. The association of the CD247 homodimer is the last step of TcR assembly in the endoplasmic reticulum and is required for transport to the cell surface.

Its subcellular location is the cell membrane. Its function is as follows. V region of the variable domain of T cell receptor (TR) beta chain that participates in the antigen recognition. Alpha-beta T cell receptors are antigen specific receptors which are essential to the immune response and are present on the cell surface of T lymphocytes. Recognize peptide-major histocompatibility (MH) (pMH) complexes that are displayed by antigen presenting cells (APC), a prerequisite for efficient T cell adaptive immunity against pathogens. Binding of alpha-beta TR to pMH complex initiates TR-CD3 clustering on the cell surface and intracellular activation of LCK that phosphorylates the ITAM motifs of CD3G, CD3D, CD3E and CD247 enabling the recruitment of ZAP70. In turn ZAP70 phosphorylates LAT, which recruits numerous signaling molecules to form the LAT signalosome. The LAT signalosome propagates signal branching to three major signaling pathways, the calcium, the mitogen-activated protein kinase (MAPK) kinase and the nuclear factor NF-kappa-B (NF-kB) pathways, leading to the mobilization of transcription factors that are critical for gene expression and essential for T cell growth and differentiation. The T cell repertoire is generated in the thymus, by V-(D)-J rearrangement. This repertoire is then shaped by intrathymic selection events to generate a peripheral T cell pool of self-MH restricted, non-autoaggressive T cells. Post-thymic interaction of alpha-beta TR with the pMH complexes shapes TR structural and functional avidity. This is T cell receptor beta variable 6-1 from Homo sapiens (Human).